The primary structure comprises 1031 residues: Kinesin heavy chain (1031 aa).

In terms of domain architecture, Kinesin motor spans 8 to 325 (NIKVVCRVRP…LMFGQRAKTI (318 aa)). Position 84 to 91 (84 to 91 (GQTSSGKT)) interacts with ATP. Residues 393-857 (PKQMTVHVSE…RDNADLRCEL (465 aa)) are a coiled coil. Residues 673-686 (TDQEDKKREEEDKM) are compositionally biased toward basic and acidic residues. Disordered stretches follow at residues 673–692 (TDQEDKKREEEDKMQSATEM) and 906–1031 (RNFA…EQGS). The globular stretch occupies residues 858-1031 (PKLERRLRAT…PLTTSGEQGS (174 aa)). The span at 932-949 (GSTGIRGGGYSGIRGGGS) shows a compositional bias: gly residues. Composition is skewed to polar residues over residues 964 to 977 (SHNNSFEKSLNPND) and 1014 to 1031 (RNNTPGKAPLTTSGEQGS).

Belongs to the TRAFAC class myosin-kinesin ATPase superfamily. Kinesin family. Kinesin subfamily. Oligomer composed of two heavy chains and two light chains.

The protein resides in the cytoplasm. The protein localises to the cytoskeleton. Functionally, kinesin is a microtubule-associated force-producing protein that may play a role in organelle transport. This chain is Kinesin heavy chain, found in Strongylocentrotus purpuratus (Purple sea urchin).